Reading from the N-terminus, the 559-residue chain is Glutamine--tRNA ligase (559 aa).

The 'HIGH' region motif lies at 36 to 46; that stretch reads PEPNGYLHLGH. ATP is bound by residues 37–39 and 43–49; these read EPN and HLGHAKS. The L-glutamine site is built by D69 and Y214. Residues T233, 263-264, and 271-273 each bind ATP; these read RL and LSK. Positions 270 to 274 match the 'KMSKS' region motif; that stretch reads LLSKR.

The protein belongs to the class-I aminoacyl-tRNA synthetase family. In terms of assembly, monomer.

It localises to the cytoplasm. The catalysed reaction is tRNA(Gln) + L-glutamine + ATP = L-glutaminyl-tRNA(Gln) + AMP + diphosphate. In Nitrobacter winogradskyi (strain ATCC 25391 / DSM 10237 / CIP 104748 / NCIMB 11846 / Nb-255), this protein is Glutamine--tRNA ligase.